Consider the following 71-residue polypeptide: Large ribosomal subunit protein uL29 (71 aa).

This sequence belongs to the universal ribosomal protein uL29 family.

The chain is Large ribosomal subunit protein uL29 from Roseiflexus sp. (strain RS-1).